The primary structure comprises 177 residues: Cytochrome c oxidase assembly protein CtaG (177 aa).

Topologically, residues M1 to T8 are cytoplasmic. The chain crosses the membrane as a helical; Signal-anchor for type II membrane protein span at residues I9–L29. Topologically, residues Y30–K177 are periplasmic.

This sequence belongs to the COX11/CtaG family.

It is found in the cell inner membrane. Exerts its effect at some terminal stage of cytochrome c oxidase synthesis, probably by being involved in the insertion of the copper B into subunit I. The sequence is that of Cytochrome c oxidase assembly protein CtaG from Ehrlichia ruminantium (strain Welgevonden).